The primary structure comprises 51 residues: Large ribosomal subunit protein bL33 (51 aa).

The protein belongs to the bacterial ribosomal protein bL33 family.

This Nitrosospira multiformis (strain ATCC 25196 / NCIMB 11849 / C 71) protein is Large ribosomal subunit protein bL33.